The chain runs to 380 residues: Alcohol dehydrogenase 3 (380 aa).

Positions 48, 50, 70, 100, 103, 106, 114, and 178 each coordinate Zn(2+). The an alcohol site is built by threonine 50 and histidine 70. Threonine 50 lines the NAD(+) pocket. NAD(+) is bound by residues 203-208, aspartate 227, arginine 232, threonine 273, valine 296, 296-298, phenylalanine 323, and arginine 373; these read GLGAVG and VGV.

It belongs to the zinc-containing alcohol dehydrogenase family. As to quaternary structure, homodimer. Homotetramer. It depends on Zn(2+) as a cofactor.

It is found in the cytoplasm. The catalysed reaction is a primary alcohol + NAD(+) = an aldehyde + NADH + H(+). It carries out the reaction a secondary alcohol + NAD(+) = a ketone + NADH + H(+). This chain is Alcohol dehydrogenase 3 (ADH3), found in Solanum tuberosum (Potato).